We begin with the raw amino-acid sequence, 321 residues long: Manganese-dependent ADP-ribose/CDP-alcohol diphosphatase (321 aa).

Zn(2+) contacts are provided by Asp25, Gln27, Asp72, Asn107, His226, His263, and His265.

The protein belongs to the ADPRibase-Mn family. As to quaternary structure, monomer. Requires Mg(2+) as cofactor.

It catalyses the reaction CDP-choline + H2O = phosphocholine + CMP + 2 H(+). The catalysed reaction is ADP-D-ribose + H2O = D-ribose 5-phosphate + AMP + 2 H(+). The enzyme catalyses CDP-glycerol + H2O = sn-glycerol 3-phosphate + CMP + 2 H(+). In terms of biological role, hydrolyzes ADP-ribose, IDP-ribose, CDP-glycerol, CDP-choline and CDP-ethanolamine, but not other non-reducing ADP-sugars or CDP-glucose. In Oryza sativa subsp. japonica (Rice), this protein is Manganese-dependent ADP-ribose/CDP-alcohol diphosphatase.